The chain runs to 124 residues: Small ribosomal subunit protein eS6 (124 aa).

It belongs to the eukaryotic ribosomal protein eS6 family.

This Thermoplasma acidophilum (strain ATCC 25905 / DSM 1728 / JCM 9062 / NBRC 15155 / AMRC-C165) protein is Small ribosomal subunit protein eS6.